A 28-amino-acid chain; its full sequence is Short cationic peptide-1c (28 aa).

Glu-28 is subject to Glutamic acid 1-amide.

In terms of tissue distribution, expressed by the venom gland.

Its subcellular location is the secreted. The polypeptide is Short cationic peptide-1c (Cupiennius salei (American wandering spider)).